The chain runs to 135 residues: Endoribonuclease YbeY (135 aa).

3 residues coordinate Zn(2+): His-102, His-106, and His-112.

Belongs to the endoribonuclease YbeY family. Zn(2+) serves as cofactor.

Its subcellular location is the cytoplasm. In terms of biological role, single strand-specific metallo-endoribonuclease involved in late-stage 70S ribosome quality control and in maturation of the 3' terminus of the 16S rRNA. The chain is Endoribonuclease YbeY from Rubrobacter xylanophilus (strain DSM 9941 / JCM 11954 / NBRC 16129 / PRD-1).